A 355-amino-acid chain; its full sequence is Dual-specificity RNA methyltransferase RlmN (355 aa).

Catalysis depends on E86, which acts as the Proton acceptor. Residues 105–338 (KEARYTVCVS…CTIRESKGLD (234 aa)) form the Radical SAM core domain. A disulfide bond links C112 and C343. [4Fe-4S] cluster contacts are provided by C119, C123, and C126. Residues 169 to 170 (GE), S201, 224 to 226 (SLH), and N300 each bind S-adenosyl-L-methionine. The S-methylcysteine intermediate role is filled by C343.

The protein belongs to the radical SAM superfamily. RlmN family. Requires [4Fe-4S] cluster as cofactor.

It is found in the cytoplasm. The enzyme catalyses adenosine(2503) in 23S rRNA + 2 reduced [2Fe-2S]-[ferredoxin] + 2 S-adenosyl-L-methionine = 2-methyladenosine(2503) in 23S rRNA + 5'-deoxyadenosine + L-methionine + 2 oxidized [2Fe-2S]-[ferredoxin] + S-adenosyl-L-homocysteine. It catalyses the reaction adenosine(37) in tRNA + 2 reduced [2Fe-2S]-[ferredoxin] + 2 S-adenosyl-L-methionine = 2-methyladenosine(37) in tRNA + 5'-deoxyadenosine + L-methionine + 2 oxidized [2Fe-2S]-[ferredoxin] + S-adenosyl-L-homocysteine. Functionally, specifically methylates position 2 of adenine 2503 in 23S rRNA and position 2 of adenine 37 in tRNAs. m2A2503 modification seems to play a crucial role in the proofreading step occurring at the peptidyl transferase center and thus would serve to optimize ribosomal fidelity. This Nitratiruptor sp. (strain SB155-2) protein is Dual-specificity RNA methyltransferase RlmN.